Consider the following 363-residue polypeptide: Uroporphyrinogen decarboxylase (363 aa).

Substrate contacts are provided by residues 36–40, Asp-85, Tyr-160, Ser-215, and His-339; that span reads RQAGR.

Belongs to the uroporphyrinogen decarboxylase family. Homodimer.

The protein localises to the cytoplasm. The enzyme catalyses uroporphyrinogen III + 4 H(+) = coproporphyrinogen III + 4 CO2. It functions in the pathway porphyrin-containing compound metabolism; protoporphyrin-IX biosynthesis; coproporphyrinogen-III from 5-aminolevulinate: step 4/4. Functionally, catalyzes the decarboxylation of four acetate groups of uroporphyrinogen-III to yield coproporphyrinogen-III. This Saccharopolyspora erythraea (strain ATCC 11635 / DSM 40517 / JCM 4748 / NBRC 13426 / NCIMB 8594 / NRRL 2338) protein is Uroporphyrinogen decarboxylase.